We begin with the raw amino-acid sequence, 465 residues long: Sperm microtubule associated protein 2-like (465 aa).

The segment covering 1-29 (MENQEFLSSSAPSEVTDGQVSTEISTCSE) has biased composition (polar residues). Residues 1 to 140 (MENQEFLSSS…REAKETELLP (140 aa)) are disordered. 2 stretches are compositionally biased toward basic and acidic residues: residues 40-70 (LDTHRELEESEDPEKHENPEEPEEVREQDQR) and 114-137 (KAREPRQLRHTREPRKSREAKETE). 8 THEG repeats span residues 174 to 192 (RKCFSSRKRTPNLSKPKKQ), 214 to 233 (GALKAQLTKRLENLAQPKEV), 260 to 279 (PALFRQPSKRIQRLSQPNGF), 297 to 316 (SLRISDPSPRILQLSVAKGT), 333 to 352 (STLSAIATPRIIELAHPRIK), 373 to 392 (AAMIAKPSPRTIALAKSKSV), 409 to 428 (ATTHSKASPRIQELANPNKR), and 446 to 465 (AALKAQCSQRIWELSQPLTR).

In Homo sapiens (Human), this protein is Sperm microtubule associated protein 2-like.